A 323-amino-acid polypeptide reads, in one-letter code: SPbeta prophage-derived uncharacterized protein YorG (323 aa).

Positions 222–272 form a coiled coil; the sequence is TAENLEKAIIEAVERQEQAEGIVAVTYEEQKQNNASEELDFNSLMDQIKEI.

The protein is SPbeta prophage-derived uncharacterized protein YorG (yorG) of Bacillus subtilis (strain 168).